Here is a 127-residue protein sequence, read N- to C-terminus: Holo-[acyl-carrier-protein] synthase (127 aa).

Mg(2+)-binding residues include Asp-8 and Glu-57.

The protein belongs to the P-Pant transferase superfamily. AcpS family. Mg(2+) serves as cofactor.

Its subcellular location is the cytoplasm. The catalysed reaction is apo-[ACP] + CoA = holo-[ACP] + adenosine 3',5'-bisphosphate + H(+). Transfers the 4'-phosphopantetheine moiety from coenzyme A to a Ser of acyl-carrier-protein. In Vesicomyosocius okutanii subsp. Calyptogena okutanii (strain HA), this protein is Holo-[acyl-carrier-protein] synthase.